Here is a 1412-residue protein sequence, read N- to C-terminus: DNA-directed RNA polymerase subunit beta' (1412 aa).

Residues Cys-70, Cys-72, Cys-85, and Cys-88 each contribute to the Zn(2+) site. Asp-460, Asp-462, and Asp-464 together coordinate Mg(2+). Zn(2+)-binding residues include Cys-819, Cys-893, Cys-900, and Cys-903. Positions 1393–1412 (EAFEFGTPSAPAEEPQHPAE) are disordered.

It belongs to the RNA polymerase beta' chain family. As to quaternary structure, the RNAP catalytic core consists of 2 alpha, 1 beta, 1 beta' and 1 omega subunit. When a sigma factor is associated with the core the holoenzyme is formed, which can initiate transcription. The cofactor is Mg(2+). Zn(2+) is required as a cofactor.

The catalysed reaction is RNA(n) + a ribonucleoside 5'-triphosphate = RNA(n+1) + diphosphate. DNA-dependent RNA polymerase catalyzes the transcription of DNA into RNA using the four ribonucleoside triphosphates as substrates. The sequence is that of DNA-directed RNA polymerase subunit beta' from Burkholderia mallei (strain NCTC 10229).